The chain runs to 243 residues: Thaumatin-like protein (243 aa).

A signal peptide spans 1–20; that stretch reads MASINLFLFAFLLLLSHASA. 8 cysteine pairs are disulfide-bonded: C29-C238, C77-C87, C92-C98, C144-C228, C149-C211, C157-C174, C178-C187, and C188-C198.

It belongs to the thaumatin family.

This Arabidopsis thaliana (Mouse-ear cress) protein is Thaumatin-like protein.